A 291-amino-acid polypeptide reads, in one-letter code: 4-hydroxy-tetrahydrodipicolinate synthase (291 aa).

Pyruvate is bound at residue threonine 44. Tyrosine 132 serves as the catalytic Proton donor/acceptor. Lysine 160 acts as the Schiff-base intermediate with substrate in catalysis. Isoleucine 202 serves as a coordination point for pyruvate.

This sequence belongs to the DapA family. Homotetramer; dimer of dimers.

It is found in the cytoplasm. It catalyses the reaction L-aspartate 4-semialdehyde + pyruvate = (2S,4S)-4-hydroxy-2,3,4,5-tetrahydrodipicolinate + H2O + H(+). The protein operates within amino-acid biosynthesis; L-lysine biosynthesis via DAP pathway; (S)-tetrahydrodipicolinate from L-aspartate: step 3/4. Catalyzes the condensation of (S)-aspartate-beta-semialdehyde [(S)-ASA] and pyruvate to 4-hydroxy-tetrahydrodipicolinate (HTPA). This is 4-hydroxy-tetrahydrodipicolinate synthase from Roseobacter denitrificans (strain ATCC 33942 / OCh 114) (Erythrobacter sp. (strain OCh 114)).